A 1280-amino-acid chain; its full sequence is Rho guanine nucleotide exchange factor 10-like protein (1280 aa).

The segment covering 1-10 (MASSNPPPQP) has biased composition (pro residues). The disordered stretch occupies residues 1 to 94 (MASSNPPPQP…TEAPTVVSNG (94 aa)). Residues 26-46 (EVEEDSGEAFEFDDSDEEEDT) are compositionally biased toward acidic residues. Serine 40 carries the post-translational modification Phosphoserine. Residues 78 to 89 (PAAAPPQTEAPT) show a composition bias toward low complexity. A phosphotyrosine mark is found at tyrosine 131 and tyrosine 152. Residues 161 to 202 (PRETEDLGWSSSEFESYSEDSGEETKPEAEPTKHRGSFQPKL) form a disordered region. Positions 183–193 (EETKPEAEPTK) are enriched in basic and acidic residues. Serine 279 is subject to Phosphoserine. Positions 314-501 (VRRHILGSIV…ETLAEKLNEQ (188 aa)) constitute a DH domain. Disordered stretches follow at residues 1133–1163 (QEEA…HTAR) and 1186–1207 (PLLS…SEED).

As to quaternary structure, interacts with RHOA, RHOB and RHOC.

It localises to the cytoplasm. In terms of biological role, acts as a guanine nucleotide exchange factor (GEF) for RHOA, RHOB and RHOC. The polypeptide is Rho guanine nucleotide exchange factor 10-like protein (Arhgef10l) (Mus musculus (Mouse)).